The chain runs to 154 residues: Myoglobin (154 aa).

Positions 2–148 (GLSDGEWTLV…FRNDMAAQYK (147 aa)) constitute a Globin domain. Residue S4 is modified to Phosphoserine. Residue H65 participates in nitrite binding. H65 provides a ligand contact to O2. Position 68 is a phosphothreonine (T68). H94 serves as a coordination point for heme b.

Belongs to the globin family. Monomeric.

It localises to the cytoplasm. It is found in the sarcoplasm. It catalyses the reaction Fe(III)-heme b-[protein] + nitric oxide + H2O = Fe(II)-heme b-[protein] + nitrite + 2 H(+). It carries out the reaction H2O2 + AH2 = A + 2 H2O. Monomeric heme protein which primary function is to store oxygen and facilitate its diffusion within muscle tissues. Reversibly binds oxygen through a pentacoordinated heme iron and enables its timely and efficient release as needed during periods of heightened demand. Depending on the oxidative conditions of tissues and cells, and in addition to its ability to bind oxygen, it also has a nitrite reductase activity whereby it regulates the production of bioactive nitric oxide. Under stress conditions, like hypoxia and anoxia, it also protects cells against reactive oxygen species thanks to its pseudoperoxidase activity. This is Myoglobin from Capra hircus (Goat).